We begin with the raw amino-acid sequence, 123 residues long: Integration host factor subunit alpha (123 aa).

It belongs to the bacterial histone-like protein family. Heterodimer of an alpha and a beta chain.

Functionally, this protein is one of the two subunits of integration host factor, a specific DNA-binding protein that functions in genetic recombination as well as in transcriptional and translational control. The chain is Integration host factor subunit alpha from Polaromonas naphthalenivorans (strain CJ2).